The sequence spans 433 residues: Protein slt1 (433 aa).

3 disordered regions span residues 159–184, 200–234, and 252–433; these read SPEESSESQAEVADQQTGPYSTSEYA, NAPEQQSGPDVAELNTLPNRSKTSSQASVSDEELS, and SNKR…DEDA. Composition is skewed to polar residues over residues 172 to 184 and 215 to 228; these read DQQTGPYSTSEYA and TLPNRSKTSSQASV. Phosphoserine occurs at positions 227, 229, and 269. Positions 343 to 353 are enriched in basic and acidic residues; the sequence is IDTKAGEKLTD. A compositionally biased stretch (polar residues) spans 385–421; it reads EGSNNHEQGSFNEPKSNVDSNDSASPKRPSSQASLRH. Phosphoserine occurs at positions 409, 415, and 418.

The chain is Protein slt1 (slt1) from Schizosaccharomyces pombe (strain 972 / ATCC 24843) (Fission yeast).